A 183-amino-acid polypeptide reads, in one-letter code: A-type ATP synthase subunit E (183 aa).

The protein belongs to the V-ATPase E subunit family. In terms of assembly, has multiple subunits with at least A(3), B(3), C, D, E, F, H, I and proteolipid K(x).

It is found in the cell membrane. In terms of biological role, component of the A-type ATP synthase that produces ATP from ADP in the presence of a proton gradient across the membrane. The sequence is that of A-type ATP synthase subunit E from Methanococcoides burtonii (strain DSM 6242 / NBRC 107633 / OCM 468 / ACE-M).